The primary structure comprises 282 residues: Parvulin-like PPIase (282 aa).

Positions 1-20 (MKKLSVIFLSVSMLSGIAFA) are cleaved as a signal peptide. The PpiC domain occupies 138 to 231 (KEQIKVAHIL…FGWHIIKVLE (94 aa)).

It belongs to the PpiC/parvulin rotamase family.

It is found in the cell outer membrane. The catalysed reaction is [protein]-peptidylproline (omega=180) = [protein]-peptidylproline (omega=0). The polypeptide is Parvulin-like PPIase (plp) (Rickettsia conorii (strain ATCC VR-613 / Malish 7)).